A 386-amino-acid polypeptide reads, in one-letter code: Methylthioribose-1-phosphate isomerase (386 aa).

Residue aspartate 258 is the Proton donor of the active site.

The protein belongs to the eIF-2B alpha/beta/delta subunits family. MtnA subfamily.

Its subcellular location is the cytoplasm. The protein resides in the nucleus. The enzyme catalyses 5-(methylsulfanyl)-alpha-D-ribose 1-phosphate = 5-(methylsulfanyl)-D-ribulose 1-phosphate. The protein operates within amino-acid biosynthesis; L-methionine biosynthesis via salvage pathway; L-methionine from S-methyl-5-thio-alpha-D-ribose 1-phosphate: step 1/6. Its function is as follows. Catalyzes the interconversion of methylthioribose-1-phosphate (MTR-1-P) into methylthioribulose-1-phosphate (MTRu-1-P). The sequence is that of Methylthioribose-1-phosphate isomerase from Uncinocarpus reesii (strain UAMH 1704).